Reading from the N-terminus, the 552-residue chain is Glutamine--tRNA ligase (552 aa).

Positions 33–43 (PEPNGYLHIGH) match the 'HIGH' region motif. Residues 34–36 (EPN) and 40–46 (HIGHAKS) each bind ATP. The L-glutamine site is built by aspartate 66 and tyrosine 210. ATP is bound by residues threonine 229, 259-260 (RL), and 267-269 (MSK). The 'KMSKS' region motif lies at 266-270 (VMSKR).

The protein belongs to the class-I aminoacyl-tRNA synthetase family. Monomer.

Its subcellular location is the cytoplasm. It carries out the reaction tRNA(Gln) + L-glutamine + ATP = L-glutaminyl-tRNA(Gln) + AMP + diphosphate. This chain is Glutamine--tRNA ligase, found in Clostridium perfringens (strain ATCC 13124 / DSM 756 / JCM 1290 / NCIMB 6125 / NCTC 8237 / Type A).